The primary structure comprises 303 residues: Glutathione transport system permease protein GsiD (303 aa).

The next 6 helical transmembrane spans lie at 40–60 (AMTA…ARWI), 105–125 (LAAG…LGLL), 144–164 (LFAF…GSGI), 165–185 (ANVI…LVRG), 222–242 (IVVF…SLSF), and 266–286 (VIAP…VLAF). In terms of domain architecture, ABC transmembrane type-1 spans 101–290 (AQISLAAGVF…LTVLAFNLLG (190 aa)).

It belongs to the binding-protein-dependent transport system permease family. As to quaternary structure, the complex is composed of two ATP-binding proteins (GsiA), two transmembrane proteins (GsiC and GsiD) and a solute-binding protein (GsiB).

The protein resides in the cell inner membrane. Part of the ABC transporter complex GsiABCD involved in glutathione import. Probably responsible for the translocation of the substrate across the membrane. This Escherichia coli O6:K15:H31 (strain 536 / UPEC) protein is Glutathione transport system permease protein GsiD.